The sequence spans 267 residues: Undecaprenyl-diphosphatase 2 (267 aa).

8 helical membrane passes run I4–I24, E43–F63, F84–H104, V109–W129, I147–T167, A186–D206, I219–A239, and F243–I263.

This sequence belongs to the UppP family.

The protein localises to the cell inner membrane. It carries out the reaction di-trans,octa-cis-undecaprenyl diphosphate + H2O = di-trans,octa-cis-undecaprenyl phosphate + phosphate + H(+). Its function is as follows. Catalyzes the dephosphorylation of undecaprenyl diphosphate (UPP). Confers resistance to bacitracin. The chain is Undecaprenyl-diphosphatase 2 from Shewanella oneidensis (strain ATCC 700550 / JCM 31522 / CIP 106686 / LMG 19005 / NCIMB 14063 / MR-1).